Reading from the N-terminus, the 96-residue chain is Large ribosomal subunit protein uL23 (96 aa).

It belongs to the universal ribosomal protein uL23 family. Part of the 50S ribosomal subunit. Contacts protein L29, and trigger factor when it is bound to the ribosome.

Its function is as follows. One of the early assembly proteins it binds 23S rRNA. One of the proteins that surrounds the polypeptide exit tunnel on the outside of the ribosome. Forms the main docking site for trigger factor binding to the ribosome. This chain is Large ribosomal subunit protein uL23, found in Syntrophus aciditrophicus (strain SB).